Here is a 640-residue protein sequence, read N- to C-terminus: DNA mismatch repair protein MutL (640 aa).

2 disordered regions span residues 332-353 and 408-431; these read PNVQVEEKPDSPRPTGESFNFP and PAHTEASLTPPKQAEPEGNPTFHD.

The protein belongs to the DNA mismatch repair MutL/HexB family.

Functionally, this protein is involved in the repair of mismatches in DNA. It is required for dam-dependent methyl-directed DNA mismatch repair. May act as a 'molecular matchmaker', a protein that promotes the formation of a stable complex between two or more DNA-binding proteins in an ATP-dependent manner without itself being part of a final effector complex. This chain is DNA mismatch repair protein MutL, found in Chloroherpeton thalassium (strain ATCC 35110 / GB-78).